Reading from the N-terminus, the 150-residue chain is MTTERSDPTALALRLLARREYGRRELGDKLLRAGCDAGDVALALDALAAAGYQDDARYVEMLTRTRVRQGHGPLRLRQDLQRAGIEVGADPEIDWLQQAQAVCRKRFGNTPPADARDYARRARFLAGRGFTGETIRQVLGAGRERDFAAD.

This sequence belongs to the RecX family.

It is found in the cytoplasm. Functionally, modulates RecA activity. The polypeptide is Regulatory protein RecX (Acidithiobacillus ferrooxidans (strain ATCC 23270 / DSM 14882 / CIP 104768 / NCIMB 8455) (Ferrobacillus ferrooxidans (strain ATCC 23270))).